The following is a 99-amino-acid chain: ATP-dependent Clp protease adapter protein ClpS (99 aa).

This sequence belongs to the ClpS family. As to quaternary structure, binds to the N-terminal domain of the chaperone ClpA.

In terms of biological role, involved in the modulation of the specificity of the ClpAP-mediated ATP-dependent protein degradation. The chain is ATP-dependent Clp protease adapter protein ClpS from Helicobacter hepaticus (strain ATCC 51449 / 3B1).